Reading from the N-terminus, the 337-residue chain is Palmitoyltransferase ZDHHC15 (337 aa).

Over 1-20 (MRRGWKMALSGGLRCCRRVL) the chain is Cytoplasmic. The chain crosses the membrane as a helical span at residues 21 to 41 (SWVPVLVIVLVVLWSYYAYVF). The Lumenal segment spans residues 42–56 (ELCLVTVLSPAEKVI). Residues 57 to 77 (YLILYHAIFVFFTWTYWKSIF) traverse the membrane as a helical segment. The Cytoplasmic portion of the chain corresponds to 78–172 (TLPQQPNQKF…NNCIGFSNYK (95 aa)). The DHHC domain maps to 129–179 (RFCDRCHLIKPDRCHHCSVCAMCVLKMDHHCPWVNNCIGFSNYKFFLQFLA). Residues cysteine 131, cysteine 134, histidine 144, cysteine 145, cysteine 148, cysteine 151, and histidine 158 each contribute to the Zn(2+) site. Residue cysteine 159 is the S-palmitoyl cysteine intermediate of the active site. Residue cysteine 165 coordinates Zn(2+). A helical transmembrane segment spans residues 173 to 193 (FFLQFLAYSVLYCLYIATTVF). Over 194–210 (SYFIKYWRGELPSVRSK) the chain is Lumenal. A helical transmembrane segment spans residues 211-234 (FHVLFLLFVACMFFVSLVILFGYH). Residues 235–337 (CWLVSRNKTT…SSSLAVETET (103 aa)) are Cytoplasmic-facing. A disordered region spans residues 306–337 (PLLANEETWEDNEDDNQDYPEGSSSLAVETET). The span at 312–323 (ETWEDNEDDNQD) shows a compositional bias: acidic residues. Polar residues predominate over residues 327-337 (GSSSLAVETET).

Belongs to the DHHC palmitoyltransferase family. Post-translationally, autopalmitoylated (in vitro). As to expression, expressed in placenta, liver, lung, kidney, heart and brain.

It localises to the golgi apparatus membrane. It is found in the postsynaptic density. It catalyses the reaction L-cysteinyl-[protein] + hexadecanoyl-CoA = S-hexadecanoyl-L-cysteinyl-[protein] + CoA. It carries out the reaction L-cysteinyl-[protein] + tetradecanoyl-CoA = S-tetradecanoyl-L-cysteinyl-[protein] + CoA. The enzyme catalyses L-cysteinyl-[protein] + octadecanoyl-CoA = S-octadecanoyl-L-cysteinyl-[protein] + CoA. Functionally, palmitoyltransferase that catalyzes the addition of palmitate onto various protein substrates. Has no stringent fatty acid selectivity and in addition to palmitate can also transfer onto target proteins myristate from tetradecanoyl-CoA and stearate from octadecanoyl-CoA. Palmitoylates IGF2R and SORT1, promoting their partitioning to an endosomal membrane subdomain where they can interact with the retromer cargo-selective complex. Thereby, regulates retrograde transport from endosomes to the Golgi apparatus of these lysosomal sorting receptors and plays a role in trafficking of lysosomal proteins. In the nervous system, catalyzes the palmitoylation of DLG4/PSD95 and regulates its synaptic clustering and function in synaptogenesis. Could be involved in the differentiation of dopaminergic neurons and the development of the diencephalon. Could also catalyze the palmitoylation of GAP43. Could also palmitoylate DNAJC5 and regulate its localization to the Golgi membrane. Could also palmitoylate FYN as shown in vitro. May palmitoylate CALHM3 subunit of gustatory voltage-gated ion channels and modulate channel gating and kinetics. This is Palmitoyltransferase ZDHHC15 from Homo sapiens (Human).